Consider the following 33-residue polypeptide: Photosystem II reaction center protein Psb30 (33 aa).

Residues leucine 5 to leucine 25 traverse the membrane as a helical segment.

This sequence belongs to the Psb30/Ycf12 family. PSII is composed of 1 copy each of membrane proteins PsbA, PsbB, PsbC, PsbD, PsbE, PsbF, PsbH, PsbI, PsbJ, PsbK, PsbL, PsbM, PsbT, PsbX, PsbY, PsbZ, Psb30/Ycf12, peripheral proteins of the oxygen-evolving complex and a large number of cofactors. It forms dimeric complexes.

It localises to the plastid. The protein localises to the chloroplast thylakoid membrane. Its function is as follows. A core subunit of photosystem II (PSII), probably helps stabilize the reaction center. The polypeptide is Photosystem II reaction center protein Psb30 (Psilotum nudum (Whisk fern)).